The sequence spans 503 residues: MTLRDVEKLRLWRLKIFRNQQPILRAKPPHASRKTQYLFQKIDNVKSQFGTDGKGDLLWQRDGMNPYHDLYDPGDLKTHRLSVTKLLTKSWCELRFAYDLYSRLPLFREAHLAAGERTHQKLENSEHTPVIRPQDIPQFSETVEIVEDDLHVLAASWAETITRLIHLFSSGDAREILCHGYLNKETNQLYDPMETEVWDPSQHILISGIIDHLTLTSKNGNLPLNNHHRSIDDSIAKLKNTRNEFAKNGLTIQISDVKTRTRKFIPPQESVQNATKLQLMYYRHFLLSLGTDSDNTYEMLLYNARIRGVDVDQPLNPANCLLIMIQMDGFVGDFVKLQNGDGFQFPKFDNAPISHSFTLADAKHHQFLQNINSHELAGQLLNGTFAKPITLRYFAMRLAQMYSMLTPLISEKLKVEYYHNNECFQEVEFVNDKKSLGESCRSASSFWFGKRAIEPVEATTFNYNQYCKHCDYRDHCAWIKDSLAKSTKLGDELTQIARRIHNI.

The [4Fe-4S] cluster site is built by cysteine 92, cysteine 467, cysteine 470, and cysteine 476.

The protein belongs to the EXO5 family. In terms of assembly, monomer. The cofactor is Mg(2+). It depends on [4Fe-4S] cluster as a cofactor.

The protein localises to the mitochondrion. Functionally, single strand DNA specific 5' exonuclease involved in mitochondrial DNA replication and recombination. Releases dinucleotides as main products of catalysis. Has the capacity to slide across 5'double-stranded DNA or 5'RNA sequences and resumes cutting two nucleotides downstream of the double-stranded-to-single-stranded junction or RNA-to-DNA junction, respectively. The chain is Exonuclease V, mitochondrial (EXO5) from Candida glabrata (strain ATCC 2001 / BCRC 20586 / JCM 3761 / NBRC 0622 / NRRL Y-65 / CBS 138) (Yeast).